The following is a 1297-amino-acid chain: Phosphoribosylformylglycinamidine synthase (1297 aa).

The segment at 303-329 is disordered; sequence ISPFPGAATGSGGEIRDEGATGRGAKP. 308-319 lines the ATP pocket; it reads GAATGSGGEIRD. 4 residues coordinate Mg(2+): Asp680, Glu719, Asn723, and Asp887. ATP is bound at residue Ser889. The Glutamine amidotransferase type-1 domain occupies 1045–1297; the sequence is IAILREQGVN…RLFRNARMVF (253 aa). The active-site Nucleophile is the Cys1138. Catalysis depends on residues His1263 and Glu1265.

This sequence in the N-terminal section; belongs to the FGAMS family. In terms of assembly, monomer.

The protein localises to the cytoplasm. It carries out the reaction N(2)-formyl-N(1)-(5-phospho-beta-D-ribosyl)glycinamide + L-glutamine + ATP + H2O = 2-formamido-N(1)-(5-O-phospho-beta-D-ribosyl)acetamidine + L-glutamate + ADP + phosphate + H(+). It functions in the pathway purine metabolism; IMP biosynthesis via de novo pathway; 5-amino-1-(5-phospho-D-ribosyl)imidazole from N(2)-formyl-N(1)-(5-phospho-D-ribosyl)glycinamide: step 1/2. In terms of biological role, phosphoribosylformylglycinamidine synthase involved in the purines biosynthetic pathway. Catalyzes the ATP-dependent conversion of formylglycinamide ribonucleotide (FGAR) and glutamine to yield formylglycinamidine ribonucleotide (FGAM) and glutamate. The chain is Phosphoribosylformylglycinamidine synthase from Haemophilus influenzae (strain 86-028NP).